Here is a 218-residue protein sequence, read N- to C-terminus: 3-oxo-tetronate 4-phosphate decarboxylase (218 aa).

Residue glutamate 86 is the Proton acceptor of the active site. Residues glutamate 86, histidine 105, and histidine 107 each contribute to the Zn(2+) site. The Proton donor role is filled by tyrosine 132. Histidine 172 contributes to the Zn(2+) binding site.

This sequence belongs to the aldolase class II family. AraD/FucA subfamily. It depends on Zn(2+) as a cofactor.

It carries out the reaction 3-dehydro-4-O-phospho-D-erythronate + H(+) = dihydroxyacetone phosphate + CO2. The catalysed reaction is 3-dehydro-4-O-phospho-L-erythronate + H(+) = dihydroxyacetone phosphate + CO2. Catalyzes the decarboxylation of 3-oxo-tetronate 4-phosphate to dihydroxyacetone phosphate (DHAP) and CO(2). In Pectobacterium atrosepticum (strain SCRI 1043 / ATCC BAA-672) (Erwinia carotovora subsp. atroseptica), this protein is 3-oxo-tetronate 4-phosphate decarboxylase.